The chain runs to 383 residues: MAEKRDYYEVLGVSKNATDDELKKAYRKKAIQYHPDKNPGDKEAEEHFKEVAEAYDVLSDPQKRSQYDQFGHAGLGGAAGGGFSGGGMSMEDIFSRFGDLFGGFGGFGGFSDMGGGSRRRVRRGSDLRVRVKLSLADISKGVEKKVKVKKQVVCSKCRGDGTEEANGKTTCQTCHGTGVVTRVSNTFLGAMQTQSTCPTCHGEGEIITKPCSKCKGEGVEIGEEVISFHIPAGVAEGMQMSVNGKGNAAPRGGVNGDLIVVIAEEPDPNLIRNGNDLIYNLLISVPLAIKGGSVEVPTIDGRAKIRIEAGTQPGKMLRLRNKGLPSVNGYGMGDQLVNVNVYIPESIDAKDEQAIAAMENSDSFKPTDAARKDIDKKYREMLD.

In terms of domain architecture, J spans 6–71 (DYYEVLGVSK…QKRSQYDQFG (66 aa)). The segment at 141 to 223 (GVEKKVKVKK…CKGEGVEIGE (83 aa)) adopts a CR-type zinc-finger fold. Residues Cys154, Cys157, Cys171, Cys174, Cys197, Cys200, Cys211, and Cys214 each coordinate Zn(2+). CXXCXGXG motif repeat units lie at residues 154-161 (CSKCRGDG), 171-178 (CQTCHGTG), 197-204 (CPTCHGEG), and 211-218 (CSKCKGEG).

It belongs to the DnaJ family. In terms of assembly, homodimer. Zn(2+) serves as cofactor.

The protein localises to the cytoplasm. Participates actively in the response to hyperosmotic and heat shock by preventing the aggregation of stress-denatured proteins and by disaggregating proteins, also in an autonomous, DnaK-independent fashion. Unfolded proteins bind initially to DnaJ; upon interaction with the DnaJ-bound protein, DnaK hydrolyzes its bound ATP, resulting in the formation of a stable complex. GrpE releases ADP from DnaK; ATP binding to DnaK triggers the release of the substrate protein, thus completing the reaction cycle. Several rounds of ATP-dependent interactions between DnaJ, DnaK and GrpE are required for fully efficient folding. Also involved, together with DnaK and GrpE, in the DNA replication of plasmids through activation of initiation proteins. The protein is Chaperone protein DnaJ of Porphyromonas gingivalis (strain ATCC BAA-308 / W83).